A 642-amino-acid polypeptide reads, in one-letter code: MASTSIMLSSFFSFFFLTFFVTYAQQNVTVHTICYYDGGNFTSNTSYSLNLNRLISSLPDLTPTINGFYNISINGEVNAIALCRGDVKPNQDCISCITTAAKQLVESCPNIIEANIWLEKCMFRYTSRIILGQMEPVPFSYTSSNVSVTDKEGFSKGLGDLLDSLGAKIDAANETKEVKFAAGVKGTIYALAQCTPDLSESDCRICLAQIFAGVPTCCDGKTGGWWTNPSCYFRFEVYPFFDLSVTSEQKQPLSSHNNNTRRSDQGKSKDRSKTLIFAVVPIVAIILGLVFLFIYLKRRRKKKTLKENAENEFESTDSLHFDFETIRVATDDFSLTNKIGEGGFGVVYKGHLPDGLEIAVKRLSIHSGQGNAEFKTEVLLMTKLQHKNLVKLFGFSIKESERLLVYEFIPNTSLDRFLFDPIKQKQLDWEKRYNIIVGVSRGLLYLHEGSEFPIIHRDLKSSNVLLDEQMLPKISDFGMARQFDFDNTQAVTRRVVGTYGYMAPEYAMHGRFSVKTDVYSFGVLVLEIITGKRNSGLGLGEGTDLPTFAWQNWIEGTSMELIDPVLLQTHDKKESMQCLEIALSCVQENPTKRPTMDSVVSMLSSDSESRQLPKPSQPGFFRRSASFSISLNDVSLTDLSAR.

The N-terminal stretch at 1–24 (MASTSIMLSSFFSFFFLTFFVTYA) is a signal peptide. The Extracellular segment spans residues 25–274 (QQNVTVHTIC…QGKSKDRSKT (250 aa)). N-linked (GlcNAc...) asparagine glycosylation is found at Asn27, Asn40, Asn44, Asn70, Asn145, Asn173, and Asn258. Gnk2-homologous domains follow at residues 29 to 130 (TVHT…SRII) and 136 to 240 (PVPF…VYPF). Residues 275-295 (LIFAVVPIVAIILGLVFLFIY) form a helical membrane-spanning segment. Residues 296–642 (LKRRRKKKTL…DVSLTDLSAR (347 aa)) lie on the Cytoplasmic side of the membrane. The 288-residue stretch at 333–620 (FSLTNKIGEG…QLPKPSQPGF (288 aa)) folds into the Protein kinase domain. ATP is bound by residues 339–347 (IGEGGFGVV) and Lys361. Tyr406 is modified (phosphotyrosine). Asp458 functions as the Proton acceptor in the catalytic mechanism. Ser462 carries the post-translational modification Phosphoserine. The residue at position 498 (Thr498) is a Phosphothreonine. A Phosphotyrosine modification is found at Tyr506.

It belongs to the protein kinase superfamily. Ser/Thr protein kinase family. CRK subfamily.

It localises to the membrane. It carries out the reaction L-seryl-[protein] + ATP = O-phospho-L-seryl-[protein] + ADP + H(+). The enzyme catalyses L-threonyl-[protein] + ATP = O-phospho-L-threonyl-[protein] + ADP + H(+). This chain is Cysteine-rich receptor-like protein kinase 27 (CRK27), found in Arabidopsis thaliana (Mouse-ear cress).